A 297-amino-acid chain; its full sequence is Protein PecM (297 aa).

The next 10 membrane-spanning stretches (helical) occupy residues 6–26 (FAFY…QFLP), 38–58 (ALPA…GWLW), 60–80 (LFVL…FAAY), 86–106 (VVAL…FLLL), 116–136 (VAAV…KAPL), 138–158 (PAGL…LVLT), 167–187 (MTML…ILPV), 203–223 (LAGY…MWFS), 231–251 (VIMS…GFLF), and 261–281 (LVGV…SLFS). EamA domains lie at 12–130 (CVWG…LLIS) and 149–276 (MSMA…IVQD).

This sequence belongs to the EamA transporter family.

It localises to the cell membrane. In terms of biological role, involved in pectinase, cellulase, and blue pigment regulation. The polypeptide is Protein PecM (pecM) (Dickeya dadantii (strain 3937) (Erwinia chrysanthemi (strain 3937))).